Here is a 416-residue protein sequence, read N- to C-terminus: UDP-N-acetylmuramoylalanine--D-glutamate ligase (416 aa).

Glycine 104–threonine 110 provides a ligand contact to ATP.

The protein belongs to the MurCDEF family.

The protein localises to the cytoplasm. It catalyses the reaction UDP-N-acetyl-alpha-D-muramoyl-L-alanine + D-glutamate + ATP = UDP-N-acetyl-alpha-D-muramoyl-L-alanyl-D-glutamate + ADP + phosphate + H(+). The protein operates within cell wall biogenesis; peptidoglycan biosynthesis. Cell wall formation. Catalyzes the addition of glutamate to the nucleotide precursor UDP-N-acetylmuramoyl-L-alanine (UMA). This Francisella tularensis subsp. tularensis (strain WY96-3418) protein is UDP-N-acetylmuramoylalanine--D-glutamate ligase.